Consider the following 416-residue polypeptide: Gamma-glutamyl phosphate reductase (416 aa).

Belongs to the gamma-glutamyl phosphate reductase family.

The protein localises to the cytoplasm. It catalyses the reaction L-glutamate 5-semialdehyde + phosphate + NADP(+) = L-glutamyl 5-phosphate + NADPH + H(+). It functions in the pathway amino-acid biosynthesis; L-proline biosynthesis; L-glutamate 5-semialdehyde from L-glutamate: step 2/2. Functionally, catalyzes the NADPH-dependent reduction of L-glutamate 5-phosphate into L-glutamate 5-semialdehyde and phosphate. The product spontaneously undergoes cyclization to form 1-pyrroline-5-carboxylate. The sequence is that of Gamma-glutamyl phosphate reductase from Salmonella newport (strain SL254).